The sequence spans 81 residues: Cell division protein ZapB (81 aa).

Residues 5 to 81 (LEVFEKLESK…QALLGRMEEV (77 aa)) adopt a coiled-coil conformation. Residues 43-64 (VHSAQNGREELERENQQLREQQ) form a disordered region. Over residues 49–59 (GREELERENQQ) the composition is skewed to basic and acidic residues.

This sequence belongs to the ZapB family. Homodimer. The ends of the coiled-coil dimer bind to each other, forming polymers. Interacts with FtsZ.

The protein localises to the cytoplasm. In terms of biological role, non-essential, abundant cell division factor that is required for proper Z-ring formation. It is recruited early to the divisome by direct interaction with FtsZ, stimulating Z-ring assembly and thereby promoting cell division earlier in the cell cycle. Its recruitment to the Z-ring requires functional FtsA or ZipA. The sequence is that of Cell division protein ZapB from Enterobacter sp. (strain 638).